The sequence spans 31 residues: Cuticle protein 54 (31 aa).

A run of 2 repeats spans residues 7–10 (AAPA) and 13–17 (AAPAI).

Its function is as follows. Component of the cuticle of migratory locust which contains more than 100 different structural proteins. The polypeptide is Cuticle protein 54 (Locusta migratoria (Migratory locust)).